Consider the following 1226-residue polypeptide: Chitin synthase IV (1226 aa).

Positions 1 to 205 (MSLPERPGGS…SRKNPATAEQ (205 aa)) are disordered. Over residues 49–65 (SVSSYAETISNPHANTE) the composition is skewed to polar residues. A compositionally biased stretch (low complexity) spans 66–75 (TLPLSPTHPT). Positions 94 to 107 (IRPERNRIDKDHRN) are enriched in basic and acidic residues. Polar residues predominate over residues 134–151 (DVSTEPSGGSQTHGSFAD). Basic and acidic residues predominate over residues 163–172 (MSGDDQEKGN). The segment covering 173–198 (TRVKSRPRRSKSGKITKETRHRKSRK) has biased composition (basic residues). A helical transmembrane segment spans residues 246 to 266 (MGLISIILVIMAIVGFLTFGF). N-linked (GlcNAc...) asparagine glycans are attached at residues Asn-381, Asn-421, and Asn-443. A helical membrane pass occupies residues 516-536 (ILILSVVGTRFVLALIFQWFI). Residues 572–671 (LPGDVGSSAM…PGPAGFIHDS (100 aa)) are disordered. 2 stretches are compositionally biased toward polar residues: residues 580–601 (AMGS…TSRF) and 618–643 (TTMS…NDSR). N-linked (GlcNAc...) asparagine glycosylation occurs at Asn-640. The segment covering 649–666 (PDPYSSAASPSDGPGPAG) has biased composition (low complexity). Asn-787 and Asn-1035 each carry an N-linked (GlcNAc...) asparagine glycan. A run of 3 helical transmembrane segments spans residues 1060-1080 (FVVF…AFTF), 1094-1114 (IIPL…ILVT), and 1118-1138 (WSYV…NFVL).

This sequence belongs to the chitin synthase family. Class IV subfamily. Highly expressed in conidia.

Its subcellular location is the cell membrane. The catalysed reaction is [(1-&gt;4)-N-acetyl-beta-D-glucosaminyl](n) + UDP-N-acetyl-alpha-D-glucosamine = [(1-&gt;4)-N-acetyl-beta-D-glucosaminyl](n+1) + UDP + H(+). In terms of biological role, polymerizes chitin, a structural polymer of the cell wall and septum, by transferring the sugar moiety of UDP-GlcNAc to the non-reducing end of the growing chitin polymer. Contributes to the production of conidia and the ability of fungal conidia to germinate. Involved in fungal stress tolerances. The protein is Chitin synthase IV of Metarhizium acridum (strain CQMa 102).